We begin with the raw amino-acid sequence, 395 residues long: Ribose-phosphate pyrophosphokinase 2, chloroplastic (395 aa).

The span at 1 to 23 (MASPAPRSLSSSSSSSSSSFCPS) shows a compositional bias: low complexity. Residues 1–33 (MASPAPRSLSSSSSSSSSSFCPSISPPPRSPSR) form a disordered region. A chloroplast-targeting transit peptide spans 1-42 (MASPAPRSLSSSSSSSSSSFCPSISPPPRSPSRASLPFSVKC). Residues D209, H211, D220, and D224 each coordinate Mg(2+). Residues 295–310 (GKVAVMLDDMIDTAGT) are binding of phosphoribosylpyrophosphate.

It belongs to the ribose-phosphate pyrophosphokinase family.

It is found in the plastid. It localises to the chloroplast. It catalyses the reaction D-ribose 5-phosphate + ATP = 5-phospho-alpha-D-ribose 1-diphosphate + AMP + H(+). In Spinacia oleracea (Spinach), this protein is Ribose-phosphate pyrophosphokinase 2, chloroplastic (PRS2).